Reading from the N-terminus, the 344-residue chain is Selenide, water dikinase (344 aa).

Cys-16 is a catalytic residue. ATP contacts are provided by residues Lys-19 and 47–49 (SRD). Asp-50 serves as a coordination point for Mg(2+). ATP is bound by residues Asp-67, Asp-90, and 138-140 (GHS). Asp-90 serves as a coordination point for Mg(2+). Mg(2+) is bound at residue Asp-226.

It belongs to the selenophosphate synthase 1 family. Class I subfamily. As to quaternary structure, homodimer. It depends on Mg(2+) as a cofactor.

The catalysed reaction is hydrogenselenide + ATP + H2O = selenophosphate + AMP + phosphate + 2 H(+). Functionally, synthesizes selenophosphate from selenide and ATP. This is Selenide, water dikinase from Bordetella bronchiseptica (strain ATCC BAA-588 / NCTC 13252 / RB50) (Alcaligenes bronchisepticus).